Here is a 451-residue protein sequence, read N- to C-terminus: 23S rRNA (uracil(1939)-C(5))-methyltransferase RlmD (451 aa).

The segment at 1 to 21 (MAKHERGLRFQPTGGVKSVQI) is disordered. In terms of domain architecture, TRAM spans 20–78 (QIPAGKKQRLSIERLSDDGRGIAFLEGKTWFVAGSLAGEEVEARVLNARGKVVEARTER). Residues Cys-91, Cys-97, Cys-100, and Cys-179 each contribute to the [4Fe-4S] cluster site. S-adenosyl-L-methionine contacts are provided by Gln-283, Phe-312, Asn-317, Glu-333, Asp-360, and Asp-381. The Nucleophile role is filled by Cys-407.

It belongs to the class I-like SAM-binding methyltransferase superfamily. RNA M5U methyltransferase family. RlmD subfamily.

The catalysed reaction is uridine(1939) in 23S rRNA + S-adenosyl-L-methionine = 5-methyluridine(1939) in 23S rRNA + S-adenosyl-L-homocysteine + H(+). Catalyzes the formation of 5-methyl-uridine at position 1939 (m5U1939) in 23S rRNA. The sequence is that of 23S rRNA (uracil(1939)-C(5))-methyltransferase RlmD from Pseudomonas syringae pv. tomato (strain ATCC BAA-871 / DC3000).